A 780-amino-acid polypeptide reads, in one-letter code: E3 SUMO-protein ligase gei-17 (780 aa).

A disordered region spans residues 181-210; the sequence is APLHSSFPNHGRSSQQSLQKSEKSNRPKKM. The 165-residue stretch at 203–367 folds into the PINIT domain; that stretch reads KSNRPKKMYA…AAGVYFVHRV (165 aa). An SP-RING-type zinc finger spans residues 400 to 485; sequence GEDDIAMDRL…LAKVDKNTTE (86 aa). Residues C431, H433, C454, and C457 each coordinate Zn(2+). Over residues 519 to 530 the composition is skewed to polar residues; sequence GTASCSSTNGNG. Disordered stretches follow at residues 519–544, 560–594, and 732–755; these read GTASCSSTNGNGLANEAAKKKPADDD, IMNSLNDSFSPGRHTASAELAAQKTPPQQKKKTKD, and QQHHLQQQQQQQQSPQIMSPSFYA. Positions 732–749 are enriched in low complexity; sequence QQHHLQQQQQQQQSPQIM.

It belongs to the PIAS family. May interact with gex-3.

It functions in the pathway protein modification; protein sumoylation. Its function is as follows. Functions as an E3-type smo-1 ligase. Mediates smo-1 conjugation to air-2 in vitro and is required for proper chromosome alignment. In the early embryo, specifically suppresses checkpoint activation in response to DNA damage, maybe by promoting mus-101 sumoylation. In embryos, plays a role in determining telomere localization in the nucleus. Acts with pie-1 to promote piRNA-mediated silencing and fertility in the adult germline. The protein is E3 SUMO-protein ligase gei-17 of Caenorhabditis elegans.